The following is a 60-amino-acid chain: Large ribosomal subunit protein bL32 (60 aa).

Residues 1–60 (MAVQQNKKTPSKRGMHRSHDFLVAPQLSVEQTTGETHMRHHISPNGFYRGRKVLKTKNDE) form a disordered region. The segment covering 49-60 (RGRKVLKTKNDE) has biased composition (basic residues).

The protein belongs to the bacterial ribosomal protein bL32 family.

The polypeptide is Large ribosomal subunit protein bL32 (Herminiimonas arsenicoxydans).